The primary structure comprises 1227 residues: JNK-interacting protein 3 (1227 aa).

Residues Met1–Tyr22 form a disordered region. The region spanning Glu25–Ala113 is the RH1 domain. Residues Arg84–Tyr191 are a coiled coil. The segment at Asp281–Leu323 is disordered. The span at Thr290–Val308 shows a compositional bias: low complexity. A coiled-coil region spans residues Gly363–Arg489. Positions Arg453–Ala524 constitute an RH2 domain. 3 disordered regions span residues Asn517–Ser572, Gly804–Pro851, and Pro863–Asn889. Residues Gly526–Ser540 show a composition bias toward gly residues. Positions Pro541–Arg550 are enriched in low complexity. Positions Glu807–Asp817 are enriched in basic and acidic residues. Residues Lys814–Glu849 adopt a coiled-coil conformation. Residues Asn879 to Asn889 are compositionally biased toward low complexity.

This sequence belongs to the JIP scaffold family. Forms homo- and heterooligomeric complexes. Binds the TPR motif-containing C-terminal of kinesin light chain, Klc. Pre-assembled syd scaffolding complexes are then transported as a cargo of kinesin, to the required subcellular location.

Its subcellular location is the cytoplasm. The JNK-interacting protein (JIP) group of scaffold proteins selectively mediates JNK-signaling by aggregating specific components of the MAPK cascade to form a functional JNK signaling module. May function as a regulator of vesicle transport, through interactions with the JNK-signaling components and motor proteins. Syd is required for efficient kinesin-I mediated axonal transport. The polypeptide is JNK-interacting protein 3 (syd) (Drosophila melanogaster (Fruit fly)).